The following is a 471-amino-acid chain: Glutamate--tRNA ligase (471 aa).

A 'HIGH' region motif is present at residues 9–19 (PSPTGYLHVGG). Residues 237–241 (KLSKR) carry the 'KMSKS' region motif. Residue K240 participates in ATP binding.

This sequence belongs to the class-I aminoacyl-tRNA synthetase family. Glutamate--tRNA ligase type 1 subfamily. As to quaternary structure, monomer.

Its subcellular location is the cytoplasm. The catalysed reaction is tRNA(Glu) + L-glutamate + ATP = L-glutamyl-tRNA(Glu) + AMP + diphosphate. Functionally, catalyzes the attachment of glutamate to tRNA(Glu) in a two-step reaction: glutamate is first activated by ATP to form Glu-AMP and then transferred to the acceptor end of tRNA(Glu). The polypeptide is Glutamate--tRNA ligase (Pectobacterium atrosepticum (strain SCRI 1043 / ATCC BAA-672) (Erwinia carotovora subsp. atroseptica)).